We begin with the raw amino-acid sequence, 410 residues long: Magnesium transporter NIPA3 (410 aa).

The Extracellular segment spans residues 1-67 (MGAQVRLPPG…ISANVENKYS (67 aa)). N-linked (GlcNAc...) asparagine glycosylation is found at asparagine 25, asparagine 35, asparagine 50, and asparagine 55. Residues 68–88 (LYVGLVLAVSSSIFIGSSFIL) form a helical membrane-spanning segment. The Cytoplasmic segment spans residues 89–114 (KKKGLLQLASKGFTRAGQGGHSYLKE). The chain crosses the membrane as a helical span at residues 115-135 (WLWWVGLLSMGAGEAANFAAY). Residue alanine 136 is a topological domain, extracellular. The chain crosses the membrane as a helical span at residues 137–157 (FAPATLVTPLGALSVLISAIL). The Cytoplasmic segment spans residues 158 to 165 (SSYFLNEH). Residues 166-186 (LNIHGKIGCILSILGSTVMVI) traverse the membrane as a helical segment. At 187–207 (HAPQEEEVTSLHEMEMKLRDP) the chain is on the extracellular side. A helical membrane pass occupies residues 208–228 (GFISFAVIITVISLVLILIVA). The Cytoplasmic segment spans residues 229 to 233 (PKKGQ). A helical transmembrane segment spans residues 234-254 (TNILVYISICSLIGAFSVSSV). Residues 255–273 (KGLGIAIKELIEWKPVYKH) lie on the Extracellular side of the membrane. The helical transmembrane segment at 274 to 294 (PLVFVLLAVLVLSVTTQINYL) threads the bilayer. Over 295–305 (NKALDTFNTSL) the chain is Cytoplasmic. The helical transmembrane segment at 306–326 (VTPIYYVFFTSMVVTCSAILF) threads the bilayer. Over 327-336 (QEWYGMTAGD) the chain is Extracellular. Residues 337 to 357 (IIGTLSGFFTIIIGIFLLHAF) traverse the membrane as a helical segment. Over 358–410 (KNTDITWSELTSTAKKEAVSLNVNENNYVLLENLECSAPGYNDDVTLFSRTDD) the chain is Cytoplasmic.

This sequence belongs to the NIPA family. Expressed in the pancreatic islets.

Its subcellular location is the golgi apparatus membrane. It catalyses the reaction Mg(2+)(in) = Mg(2+)(out). Functionally, acts as a Mg(2+) transporter. Can also transport other divalent cations such as Fe(2+), Sr(2+), Ba(2+), Mn(2+), Cu(2+) and Co(2+) but to a much less extent than Mg(2+). The sequence is that of Magnesium transporter NIPA3 (NIPAL1) from Homo sapiens (Human).